Consider the following 416-residue polypeptide: MQPRRPDRFDGLEYRGTSWGRGDGDVPPYQHGFPARSFSSSGDLSQHWVTTPPDIPGSRNLHWGEKSPQYGADSNAGPAAVGEESSSSSSGGEHLNRFAGFGIGLASLFTENVLAHPCIVLRRQCQVNYHARNYQLSPFSIVNIMYSFTKTQGFRALWKGMGSTFIVQGISLGAEGMLSEFTHLPRELNHKWNPKQIGGHLLLKGLVYVIVTPFYSASLIETVQSEIIHDNPGILDCLKEGIGRVLNLGVPYSKRLLPLLVLTFPTVLHGILHYIISSTIQKCVLFFIKKKSPAQLPGDGSNAVQNKLEDYFPELIANFAASLCADVLLYPLETVLHRLHIQGTRTIIDNTDLGHEVVPINSQYEGLKDCINTIKREEGGLGFYKGFGAVVVQYTLHAIVLQITKIIYSSVVQTAS.

The segment covering 1 to 13 has biased composition (basic and acidic residues); that stretch reads MQPRRPDRFDGLE. The disordered stretch occupies residues 1–91; sequence MQPRRPDRFD…GEESSSSSSG (91 aa). The segment covering 37-49 has biased composition (polar residues); the sequence is SFSSSGDLSQHWV. The segment covering 82-91 has biased composition (low complexity); sequence GEESSSSSSG. The Solcar 1 repeat unit spans residues 94 to 185; that stretch reads HLNRFAGFGI…GMLSEFTHLP (92 aa). A run of 6 helical transmembrane segments spans residues 101 to 121, 161 to 181, 197 to 217, 256 to 276, 312 to 332, and 381 to 401; these read FGIG…CIVL, MGST…LSEF, IGGH…FYSA, LLPL…HYII, FPEL…LYPL, and LGFY…AIVL. One copy of the Solcar 2 repeat lies at 309-414; the sequence is EDYFPELIAN…KIIYSSVVQT (106 aa).

Belongs to the mitochondrial carrier (TC 2.A.29) family.

Its subcellular location is the mitochondrion outer membrane. Its function is as follows. May play a role in mitochondrial dynamics by controlling mitochondrial membrane fission. This chain is Solute carrier family 25 member 46 (slc25a46), found in Xenopus tropicalis (Western clawed frog).